The primary structure comprises 208 residues: Holliday junction resolvase RecU (208 aa).

Residues Thr87, Asp89, Glu102, and Gln121 each contribute to the Mg(2+) site.

The protein belongs to the RecU family. Mg(2+) is required as a cofactor.

Its subcellular location is the cytoplasm. The enzyme catalyses Endonucleolytic cleavage at a junction such as a reciprocal single-stranded crossover between two homologous DNA duplexes (Holliday junction).. In terms of biological role, endonuclease that resolves Holliday junction intermediates in genetic recombination. Cleaves mobile four-strand junctions by introducing symmetrical nicks in paired strands. Promotes annealing of linear ssDNA with homologous dsDNA. Required for DNA repair, homologous recombination and chromosome segregation. This Staphylococcus aureus (strain Mu3 / ATCC 700698) protein is Holliday junction resolvase RecU.